The chain runs to 428 residues: Cytochrome c biogenesis protein CcsB (428 aa).

3 helical membrane-spanning segments follow: residues 14-34 (LRFA…GTFI), 72-92 (SNWF…CSFR), and 162-182 (LGPI…AYGN).

It belongs to the Ccs1/CcsB family. As to quaternary structure, may interact with CcsA.

It localises to the cellular thylakoid membrane. Functionally, required during biogenesis of c-type cytochromes (cytochrome c6 and cytochrome f) at the step of heme attachment. The chain is Cytochrome c biogenesis protein CcsB from Prochlorococcus marinus subsp. pastoris (strain CCMP1986 / NIES-2087 / MED4).